Here is a 662-residue protein sequence, read N- to C-terminus: Pro-neuregulin-1, membrane-bound isoform (662 aa).

Positions 1–13 (MSERKEGRGKGKG) are excised as a propeptide. Residues 1–52 (MSERKEGRGKGKGKKKDRGSRGKPGPAEGDPSPALPPRLKEMKSQESAAGSK) are disordered. Residues 14 to 265 (KKKDRGSRGK…SKAEELYQKR (252 aa)) are Extracellular-facing. The Ig-like C2-type domain maps to 37–128 (PRLKEMKSQE…GNDSASANIT (92 aa)). A disulfide bridge connects residues cysteine 57 and cysteine 112. N-linked (GlcNAc...) asparagine glycans are attached at residues asparagine 120, asparagine 126, and asparagine 164. The 45-residue stretch at 178-222 (HLIKCAEKEKTFCVNGGECFTVKDLSNPSRYLCKCPNEFTGDRCQ) folds into the EGF-like domain. Intrachain disulfides connect cysteine 182/cysteine 196, cysteine 190/cysteine 210, and cysteine 212/cysteine 221. The helical transmembrane segment at 266-288 (VLTITGICIALLVVGIMCVVAYC) threads the bilayer. Topologically, residues 289 to 662 (KTKKQRQKLH…VIANQDPIAV (374 aa)) are cytoplasmic. The segment covering 358–373 (SHYTSTAHHSTTVTQT) has biased composition (low complexity). 3 disordered regions span residues 358-383 (SHYT…NGHT), 398-480 (SVEN…PVSS), and 547-610 (YETT…DTPF). A compositionally biased stretch (polar residues) spans 374–383 (PSHSWSNGHT). Residues 410 to 420 (GPRGRLHGLGG) show a composition bias toward gly residues. Residues 425-445 (SFLRHARETPDSYRDSPHSER) are compositionally biased toward basic and acidic residues. Positions 564 to 574 (TNSRRAKRTKP) are enriched in basic residues. Residues 585 to 596 (DSNTSSVSSNSE) are compositionally biased toward low complexity.

The protein belongs to the neuregulin family. The cytoplasmic domain interacts with the LIM domain region of LIMK1. Forms a ternary complex with ERBB3 and ITGAV:ITGB3 or ITGA6:ITGB4. Interacts with NRDC and BACE1. Post-translationally, proteolytic cleavage close to the plasma membrane on the external face leads to the release of the soluble growth factor form. In terms of processing, N- and O-glycosylated. Extensive glycosylation precedes the proteolytic cleavage. As to expression, widely expressed. Most tissues contain isoform alpha2A and isoform alpha2B. Isoform Alpha2 and isoform beta2 are the predominant forms in mesenchymal and non-neuronal organs. Isoform Beta1 is enriched in brain and spinal cord, but not in muscle and heart. Isoform Alpha2C is highly expressed in spinal cord, moderately in lung, brain, ovary, and stomach, in low amounts in the kidney, skin and heart and not detected in the liver, spleen, and placenta.

The protein localises to the cell membrane. The protein resides in the secreted. In terms of biological role, direct ligand for ERBB3 and ERBB4 tyrosine kinase receptors. Concomitantly recruits ERBB1 and ERBB2 coreceptors, resulting in ligand-stimulated tyrosine phosphorylation and activation of the ERBB receptors. The multiple isoforms perform diverse functions such as inducing growth and differentiation of epithelial, glial, neuronal, and skeletal muscle cells; inducing expression of acetylcholine receptor in synaptic vesicles during the formation of the neuromuscular junction; stimulating lobuloalveolar budding and milk production in the mammary gland and inducing differentiation of mammary tumor cells; stimulating Schwann cell proliferation; implication in the development of the myocardium such as trabeculation of the developing heart. Binds to ERBB4 and ERBB3. Acts as a ligand for integrins and binds (via EGF domain) to integrins ITGAV:ITGB3 or ITGA6:ITGB4. Its binding to integrins and subsequent ternary complex formation with integrins and ERRB3 are essential for NRG1-ERBB signaling. Induces the phosphorylation and activation of MAPK3/ERK1, MAPK1/ERK2 and AKT1, and ligand-dependent ERBB4 endocytosis is essential for the NRG1-mediated activation of these kinases in neurons. The chain is Pro-neuregulin-1, membrane-bound isoform (Nrg1) from Rattus norvegicus (Rat).